The chain runs to 149 residues: MSRRKTREPKEENVLGPTVREGEFVFGVAHIFASFNDTFIHVTDLSGRETLVRITGGMKVKADRDESSPYAAMLAAQDVAQRCKELGITALHIKLRATGGNKTKTPGPGAQSALRALARSGMKIGRIEDVTPVPTDSTRRKGGRRGRRL.

A disordered region spans residues 130-149 (VTPVPTDSTRRKGGRRGRRL). The segment covering 140–149 (RKGGRRGRRL) has biased composition (basic residues).

Belongs to the universal ribosomal protein uS11 family.

This Zea mays (Maize) protein is Small ribosomal subunit protein uS11z.